Here is a 349-residue protein sequence, read N- to C-terminus: Cyclic AMP-dependent transcription factor ATF-4 (349 aa).

Disordered regions lie at residues 49-75 (FSSD…TGKE), 204-271 (PPCV…TAKV), and 279-298 (KLKK…QKKR). The residue at position 60 (proline 60) is a 4-hydroxyproline. Residue threonine 212 is modified to Phosphothreonine. Phosphoserine is present on residues serine 214, serine 218, serine 223, serine 230, and serine 234. Residues 214–223 (SDNDSGICMS) carry the BetaTrCP degron motif motif. A compositionally biased stretch (polar residues) spans 229–239 (GSPQHSPSTSR). Position 235 is a 4-hydroxyproline (proline 235). Residue serine 247 is modified to Phosphoserine. Phosphoserine; by RPS6KA3 is present on serine 251. Glycyl lysine isopeptide (Lys-Gly) (interchain with G-Cter in SUMO2) cross-links involve residues lysine 258 and lysine 270. Residues 276–339 (LDKKLKKMEQ…QYLKDLIEEV (64 aa)) form the bZIP domain. Positions 278–298 (KKLKKMEQNKTAATRYRQKKR) are basic motif. The interaction with GABBR1 stretch occupies residues 303–339 (ALTGECKELEKKNEALKEKADSLAKEIQYLKDLIEEV). The leucine-zipper stretch occupies residues 304-332 (LTGECKELEKKNEALKEKADSLAKEIQYL). Position 309 is an N6-acetyllysine (lysine 309).

This sequence belongs to the bZIP family. As to quaternary structure, binds DNA as a homodimer and as a heterodimer. Heterodimer; heterodimerizes with CEBPB. Heterodimer; heterodimerizes with DDIT3/CHOP. Interacts with CEP290 (via an N-terminal region). Interacts with NEK6, DAPK2 (isoform 2) and ZIPK/DAPK3. Interacts (via its leucine zipper domain) with GABBR1 and GABBR2 (via their C-termini). Forms a heterodimer with TXLNG in osteoblasts. Interacts (via its DNA binding domain) with FOXO1 (C-terminal half); the interaction occurs in osteoblasts and regulates glucose homeostasis through suppression of beta-cell proliferation and a decrease in insulin production. Interacts with SATB2; the interaction results in enhanced DNA binding and transactivation by these transcription factors. Interacts with ABRAXAS2. Interacts with TRIB3, inhibiting the transactivation activity of ATF4. Interacts with DISC1; which inhibits ATF4 transcription factor activity by disrupting ATF4 dimerization and DNA-binding. Interacts with EP300/p300; EP300/p300 stabilizes ATF4 and increases its transcriptional activity independently of its catalytic activity by preventing its ubiquitination. Ubiquitinated by SCF(BTRC) in response to mTORC1 signal, followed by proteasomal degradation and leading to down-regulate expression of SIRT4. Interaction with EP300/p300 inhibits ubiquitination by SCF(BTRC). Post-translationally, phosphorylation at Ser-251 by RPS6KA3/RSK2 in osteoblasts enhances transactivation activity and promotes osteoblast differentiation. Phosphorylated on the betaTrCP degron motif at Ser-218, followed by phosphorylation at Thr-212, Ser-223, Ser-230, Ser-234 and Ser-247, promoting interaction with BTRC and ubiquitination. Phosphorylation is promoted by mTORC1. Phosphorylation at Ser-214 by CK2 decreases its stability. Phosphorylated by NEK6. In terms of processing, hydroxylated by PHD3, leading to decreased protein stability. As to expression, ubiquitously expressed in adults.

Its subcellular location is the nucleus. The protein resides in the nucleus speckle. It is found in the cytoplasm. The protein localises to the cell membrane. It localises to the cytoskeleton. Its subcellular location is the microtubule organizing center. The protein resides in the centrosome. Functionally, transcription factor that binds the cAMP response element (CRE) (consensus: 5'-GTGACGT[AC][AG]-3') and displays two biological functions, as regulator of metabolic and redox processes under normal cellular conditions, and as master transcription factor during integrated stress response (ISR). Binds to asymmetric CRE's as a heterodimer and to palindromic CRE's as a homodimer. Core effector of the ISR, which is required for adaptation to various stress such as endoplasmic reticulum (ER) stress, amino acid starvation, mitochondrial stress or oxidative stress. During ISR, ATF4 translation is induced via an alternative ribosome translation re-initiation mechanism in response to EIF2S1/eIF-2-alpha phosphorylation, and stress-induced ATF4 acts as a master transcription factor of stress-responsive genes in order to promote cell recovery. Promotes the transcription of genes linked to amino acid sufficiency and resistance to oxidative stress to protect cells against metabolic consequences of ER oxidation. Activates the transcription of NLRP1, possibly in concert with other factors in response to ER stress. Activates the transcription of asparagine synthetase (ASNS) in response to amino acid deprivation or ER stress. However, when associated with DDIT3/CHOP, the transcriptional activation of the ASNS gene is inhibited in response to amino acid deprivation. Together with DDIT3/CHOP, mediates programmed cell death by promoting the expression of genes involved in cellular amino acid metabolic processes, mRNA translation and the terminal unfolded protein response (terminal UPR), a cellular response that elicits programmed cell death when ER stress is prolonged and unresolved. Activates the expression of COX7A2L/SCAF1 downstream of the EIF2AK3/PERK-mediated unfolded protein response, thereby promoting formation of respiratory chain supercomplexes and increasing mitochondrial oxidative phosphorylation. Together with DDIT3/CHOP, activates the transcription of the IRS-regulator TRIB3 and promotes ER stress-induced neuronal cell death by regulating the expression of BBC3/PUMA in response to ER stress. May cooperate with the UPR transcriptional regulator QRICH1 to regulate ER protein homeostasis which is critical for cell viability in response to ER stress. In the absence of stress, ATF4 translation is at low levels and it is required for normal metabolic processes such as embryonic lens formation, fetal liver hematopoiesis, bone development and synaptic plasticity. Acts as a regulator of osteoblast differentiation in response to phosphorylation by RPS6KA3/RSK2: phosphorylation in osteoblasts enhances transactivation activity and promotes expression of osteoblast-specific genes and post-transcriptionally regulates the synthesis of Type I collagen, the main constituent of the bone matrix. Cooperates with FOXO1 in osteoblasts to regulate glucose homeostasis through suppression of beta-cell production and decrease in insulin production. Activates transcription of SIRT4. Regulates the circadian expression of the core clock component PER2 and the serotonin transporter SLC6A4. Binds in a circadian time-dependent manner to the cAMP response elements (CRE) in the SLC6A4 and PER2 promoters and periodically activates the transcription of these genes. Mainly acts as a transcriptional activator in cellular stress adaptation, but it can also act as a transcriptional repressor: acts as a regulator of synaptic plasticity by repressing transcription, thereby inhibiting induction and maintenance of long-term memory. Regulates synaptic functions via interaction with DISC1 in neurons, which inhibits ATF4 transcription factor activity by disrupting ATF4 dimerization and DNA-binding. The chain is Cyclic AMP-dependent transcription factor ATF-4 from Mus musculus (Mouse).